The chain runs to 202 residues: Ras-related protein Rab-18 (202 aa).

Ser-18, Gly-21, Lys-22, Ser-23, Ser-24, Asp-35, Pro-36, Thr-41, Gly-67, Lys-124, Asp-126, and Ala-153 together coordinate GTP. Residues 38-46 carry the Effector region motif; sequence QAATIGVDF. Residues Cys-198 and Cys-200 are each lipidated (S-geranylgeranyl cysteine).

Belongs to the small GTPase superfamily. Rab family.

The protein localises to the cell membrane. The enzyme catalyses GTP + H2O = GDP + phosphate + H(+). Functionally, the small GTPases Rab are key regulators of intracellular membrane trafficking, from the formation of transport vesicles to their fusion with membranes. Rabs cycle between an inactive GDP-bound form and an active GTP-bound form that is able to recruit to membranes different sets of downstream effectors directly responsible for vesicle formation, movement, tethering and fusion. In Lymnaea stagnalis (Great pond snail), this protein is Ras-related protein Rab-18 (RAB18A).